We begin with the raw amino-acid sequence, 546 residues long: Probable acyl-activating enzyme 21 (546 aa).

It belongs to the ATP-dependent AMP-binding enzyme family.

Functionally, may act as an acid--thiol ligase that activates carboxylic acids by forming acyl-CoAs. The polypeptide is Probable acyl-activating enzyme 21 (AEE21) (Arabidopsis thaliana (Mouse-ear cress)).